The following is a 105-amino-acid chain: Small ribosomal subunit protein uS10 (105 aa).

The protein belongs to the universal ribosomal protein uS10 family. In terms of assembly, part of the 30S ribosomal subunit.

Involved in the binding of tRNA to the ribosomes. The polypeptide is Small ribosomal subunit protein uS10 (Gloeothece citriformis (strain PCC 7424) (Cyanothece sp. (strain PCC 7424))).